We begin with the raw amino-acid sequence, 387 residues long: MKKKILLLGSGELGKEFVIAAQRLGQYVIAVDSYDDAPAMQVAHEKEIINMLDGNLLDQIIAKHKPDLIVPEIEAIKTERFYEYEKQGYQVVPSAKAANFTMNRKSIRDLAAKDLKLLTAKYAYASSIDELIKATEILGFPCVVKPLMSSSGKGQSVIQSREEISKAWEASQTKGRAGAAEIIVEEFIPFESEITLLTVTQKNGKTLFCPPIGHRQERGDYQESWQPAAISEVQLKEAQRMADAVTKELTGFGIWGVEFFLTEDKVYFSELSPRPHDTGMVTLAGTQNFNEFELHLRAILGIPILEITLERKGASAVILASTENKTPEISGLDIASGMSESDFRIFGKPITRPYRRMGVTLSYSTKGEEISSLRKRAVLLASKIKVD.

N(1)-(5-phospho-beta-D-ribosyl)glycinamide contacts are provided by residues 12–13 and Glu-72; that span reads EL. Residues Arg-104, Lys-145, 150–155, 185–188, and Glu-193 contribute to the ATP site; these read SSGKGQ and EEFI. The region spanning 109-300 is the ATP-grasp domain; it reads DLAAKDLKLL…EFELHLRAIL (192 aa). Residues Glu-258 and Glu-270 each coordinate Mg(2+). Residues Asp-277, Lys-348, and 355-356 contribute to the N(1)-(5-phospho-beta-D-ribosyl)glycinamide site; that span reads RR.

It belongs to the PurK/PurT family. In terms of assembly, homodimer.

It carries out the reaction N(1)-(5-phospho-beta-D-ribosyl)glycinamide + formate + ATP = N(2)-formyl-N(1)-(5-phospho-beta-D-ribosyl)glycinamide + ADP + phosphate + H(+). It participates in purine metabolism; IMP biosynthesis via de novo pathway; N(2)-formyl-N(1)-(5-phospho-D-ribosyl)glycinamide from N(1)-(5-phospho-D-ribosyl)glycinamide (formate route): step 1/1. In terms of biological role, involved in the de novo purine biosynthesis. Catalyzes the transfer of formate to 5-phospho-ribosyl-glycinamide (GAR), producing 5-phospho-ribosyl-N-formylglycinamide (FGAR). Formate is provided by PurU via hydrolysis of 10-formyl-tetrahydrofolate. The polypeptide is Formate-dependent phosphoribosylglycinamide formyltransferase (Leptospira interrogans serogroup Icterohaemorrhagiae serovar copenhageni (strain Fiocruz L1-130)).